The following is a 320-amino-acid chain: MPDPMRSYLDFEKPVAELDSKIDELRALAASGSDISEEISSIEEKAAQALKDLYANLTPWQKTQVARHPQRPHFSDFVKGLITEFTPLAGDRKFGEDEALIGGFGRFRGESICVIGQEKGATTESRLKHNFGMARPEGYRKAVRLMDMADRFDIPVLSLVDSAGAYPGIGAEERGQAEAIARSTDACLSLGVANIAVIIGEGGSGGAIAIATANRVLMLEHAIYSVISPEAASSILWRDSSKAQEAATNMKITAQDLLRFGVIDAILKEPAGGAHRDPAAVIALTGDAIAGALNDLRNLDRDSLRQQRRQKFIDIGRKLG.

Residues 41 to 295 (SIEEKAAQAL…GDAIAGALND (255 aa)) form the CoA carboxyltransferase C-terminal domain.

This sequence belongs to the AccA family. As to quaternary structure, acetyl-CoA carboxylase is a heterohexamer composed of biotin carboxyl carrier protein (AccB), biotin carboxylase (AccC) and two subunits each of ACCase subunit alpha (AccA) and ACCase subunit beta (AccD).

It localises to the cytoplasm. The enzyme catalyses N(6)-carboxybiotinyl-L-lysyl-[protein] + acetyl-CoA = N(6)-biotinyl-L-lysyl-[protein] + malonyl-CoA. It functions in the pathway lipid metabolism; malonyl-CoA biosynthesis; malonyl-CoA from acetyl-CoA: step 1/1. Component of the acetyl coenzyme A carboxylase (ACC) complex. First, biotin carboxylase catalyzes the carboxylation of biotin on its carrier protein (BCCP) and then the CO(2) group is transferred by the carboxyltransferase to acetyl-CoA to form malonyl-CoA. This is Acetyl-coenzyme A carboxylase carboxyl transferase subunit alpha from Nitrobacter winogradskyi (strain ATCC 25391 / DSM 10237 / CIP 104748 / NCIMB 11846 / Nb-255).